The primary structure comprises 319 residues: Methyltransferase tpcM (319 aa).

Residues 63–155 (DVGAGIGPYA…QLRPGGTFAC (93 aa)) are methyltransferase domain.

Belongs to the methyltransferase superfamily. Specifically expressed in conidia.

It participates in secondary metabolite biosynthesis. Its function is as follows. Methyltransferase; part of the gene cluster that mediates the biosynthesis of trypacidin, a mycotoxin with antiprotozoal activity and that plays a role in the infection process. The pathway begins with the synthesis of atrochrysone thioester by the polyketide synthase (PKS) tpcC. The atrochrysone carboxyl ACP thioesterase tpcB then breaks the thioester bond and releases the atrochrysone carboxylic acid from tpcC. The decarboxylase tpcK converts atrochrysone carboxylic acid to atrochrysone which is further reduced into emodin anthrone. The next step is performed by the emodin anthrone oxygenase tpcL that catalyzes the oxidation of emodinanthrone to emodin. Emodin O-methyltransferase encoded by tpcA catalyzes methylation of the 8-hydroxy group of emodin to form questin. Ring cleavage of questin by questin oxidase tpcI leads to desmethylsulochrin via several intermediates including questin epoxide. Another methylation step catalyzed by tpcM leads to the formation of sulochrin which is further converted to monomethylsulfochrin by tpcH. Finally, the tpcJ catalyzes the conversion of monomethylsulfochrin to trypacidin. Trypacidin is toxic for human pulmonary and bronchial epithelial cells by initiating the intracellular formation of nitric oxide (NO) and hydrogen peroxide (H(2)O(2)), thus triggering host necrotic cell death. The trypacidin pathway is also able to produce endocrocin via a distinct route from the endocrocin Enc pathway. In Aspergillus fumigatus (strain ATCC MYA-4609 / CBS 101355 / FGSC A1100 / Af293) (Neosartorya fumigata), this protein is Methyltransferase tpcM.